Consider the following 35-residue polypeptide: Photosystem II reaction center protein T (35 aa).

The chain crosses the membrane as a helical span at residues 3–23 (ALVYTFLLIGTLGIIFFAIFF).

The protein belongs to the PsbT family. In terms of assembly, PSII is composed of 1 copy each of membrane proteins PsbA, PsbB, PsbC, PsbD, PsbE, PsbF, PsbH, PsbI, PsbJ, PsbK, PsbL, PsbM, PsbT, PsbY, PsbZ, Psb30/Ycf12, at least 3 peripheral proteins of the oxygen-evolving complex and a large number of cofactors. It forms dimeric complexes.

The protein resides in the plastid. It is found in the chloroplast thylakoid membrane. In terms of biological role, found at the monomer-monomer interface of the photosystem II (PS II) dimer, plays a role in assembly and dimerization of PSII. PSII is a light-driven water plastoquinone oxidoreductase, using light energy to abstract electrons from H(2)O, generating a proton gradient subsequently used for ATP formation. The chain is Photosystem II reaction center protein T from Coleochaete orbicularis (Charophycean green alga).